A 192-amino-acid polypeptide reads, in one-letter code: Adenylate kinase (192 aa).

Position 10–15 (10–15) interacts with ATP; sequence GAGKGT. Positions 30 to 59 are NMP; that stretch reads STGDMLREAIEKETEIGKQAKIFIESGALV. AMP is bound by residues Thr31, Arg36, 57–59, 85–88, and Gln92; these read ALV and GYPR. An LID region spans residues 126–142; the sequence is KRVEEVVAVGGKIRSDD. ATP is bound at residue Arg127. 2 residues coordinate AMP: Arg139 and Arg150. An ATP-binding site is contributed by Ala178.

Belongs to the adenylate kinase family. Monomer.

It is found in the cytoplasm. It carries out the reaction AMP + ATP = 2 ADP. The protein operates within purine metabolism; AMP biosynthesis via salvage pathway; AMP from ADP: step 1/1. Catalyzes the reversible transfer of the terminal phosphate group between ATP and AMP. Plays an important role in cellular energy homeostasis and in adenine nucleotide metabolism. This Bartonella bacilliformis (strain ATCC 35685 / KC583 / Herrer 020/F12,63) protein is Adenylate kinase.